We begin with the raw amino-acid sequence, 279 residues long: Pantothenate synthetase (279 aa).

31-38 contributes to the ATP binding site; that stretch reads MGALHEGH. Residue histidine 38 is the Proton donor of the active site. Position 62 (glutamine 62) interacts with (R)-pantoate. Glutamine 62 contributes to the beta-alanine binding site. 148–151 provides a ligand contact to ATP; the sequence is GEKD. Glutamine 154 is a (R)-pantoate binding site. Residues valine 177 and 185–188 each bind ATP; that span reads LSSR.

This sequence belongs to the pantothenate synthetase family. As to quaternary structure, homodimer.

It localises to the cytoplasm. It catalyses the reaction (R)-pantoate + beta-alanine + ATP = (R)-pantothenate + AMP + diphosphate + H(+). The protein operates within cofactor biosynthesis; (R)-pantothenate biosynthesis; (R)-pantothenate from (R)-pantoate and beta-alanine: step 1/1. Its function is as follows. Catalyzes the condensation of pantoate with beta-alanine in an ATP-dependent reaction via a pantoyl-adenylate intermediate. The chain is Pantothenate synthetase from Cereibacter sphaeroides (strain ATCC 17023 / DSM 158 / JCM 6121 / CCUG 31486 / LMG 2827 / NBRC 12203 / NCIMB 8253 / ATH 2.4.1.) (Rhodobacter sphaeroides).